The primary structure comprises 66 residues: Large ribosomal subunit protein bL35 (66 aa).

This sequence belongs to the bacterial ribosomal protein bL35 family.

In Moorella thermoacetica (strain ATCC 39073 / JCM 9320), this protein is Large ribosomal subunit protein bL35.